The sequence spans 414 residues: Carbohydrate sulfotransferase 12 (414 aa).

Over 1-5 (MTKAR) the chain is Cytoplasmic. Residues 6 to 26 (LFRLWLVLGSVFMILLIIVYW) traverse the membrane as a helical; Signal-anchor for type II membrane protein segment. Over 27–414 (DSAGAAHFYL…YPKPENLLRD (388 aa)) the chain is Lumenal. A disordered region spans residues 80–125 (QSDLPRKETEQPPAPGSMEESVRGYDWSPRDARRSPDQGRQQAERR). The span at 99 to 125 (ESVRGYDWSPRDARRSPDQGRQQAERR) shows a compositional bias: basic and acidic residues. N134 is a glycosylation site (N-linked (GlcNAc...) asparagine). Residue 171–177 (PKVACTN) participates in 3'-phosphoadenylyl sulfate binding. N209 is a glycosylation site (N-linked (GlcNAc...) asparagine). 245–253 (RDPFVRLIS) contributes to the 3'-phosphoadenylyl sulfate binding site. N280 and N370 each carry an N-linked (GlcNAc...) asparagine glycan.

It belongs to the sulfotransferase 2 family. As to expression, widely expressed. Expressed a high level in spinal chord, heart, spleen, thyroid, pituitary gland, adrenal gland, peripheral blood leukocytes, thymus, lung, small intestine, fetal kidney, fetal spleen and fetal lung.

It is found in the golgi apparatus membrane. It carries out the reaction chondroitin beta-D-glucuronate + n 3'-phosphoadenylyl sulfate = chondroitin 4'-sulfate + n adenosine 3',5'-bisphosphate + n H(+). In terms of biological role, catalyzes the transfer of sulfate to position 4 of the N-acetylgalactosamine (GalNAc) residue of chondroitin and desulfated dermatan sulfate. Chondroitin sulfate constitutes the predominant proteoglycan present in cartilage and is distributed on the surfaces of many cells and extracellular matrices. Activity toward partially desulfated dermatan sulfate is however lower. Does not form 4, 6-di-O-sulfated GalNAc when chondroitin sulfate C is used as an acceptor. The protein is Carbohydrate sulfotransferase 12 (CHST12) of Homo sapiens (Human).